Here is a 426-residue protein sequence, read N- to C-terminus: Adenylosuccinate synthetase (426 aa).

GTP is bound by residues 12–18 (GDEGKGK) and 40–42 (GHT). The active-site Proton acceptor is the Asp13. Mg(2+) contacts are provided by Asp13 and Gly40. Residues 13–16 (DEGK), 38–41 (NAGH), Thr130, Arg144, Gln224, Thr239, and Arg303 contribute to the IMP site. The Proton donor role is filled by His41. A substrate-binding site is contributed by 299–305 (TVTNRVR). GTP is bound by residues Arg305, 331-333 (KLD), and 413-415 (STG).

Belongs to the adenylosuccinate synthetase family. Homodimer. It depends on Mg(2+) as a cofactor.

It is found in the cytoplasm. The catalysed reaction is IMP + L-aspartate + GTP = N(6)-(1,2-dicarboxyethyl)-AMP + GDP + phosphate + 2 H(+). It functions in the pathway purine metabolism; AMP biosynthesis via de novo pathway; AMP from IMP: step 1/2. In terms of biological role, plays an important role in the de novo pathway of purine nucleotide biosynthesis. Catalyzes the first committed step in the biosynthesis of AMP from IMP. The chain is Adenylosuccinate synthetase from Anaplasma marginale (strain St. Maries).